The sequence spans 170 residues: MMKFMCIFVCAIAAVSANAYGRQGYGSVPVGGYAYQVQPALTVKAIVPAGGYGGGSYGGGYGNNNYGRSIEVPVSAHYTSSRGYGAAPVDRQAISLAKLSLAAPNAGAPLVWKEPRQIVERSYGPQQSYGQKHSYGYGEQAQGASAAAASSSVAGQHSGYKNSGYKNSSY.

A signal peptide spans 1–17 (MMKFMCIFVCAIAAVSA). The segment covering 146–159 (AAAASSSVAGQHSG) has biased composition (low complexity). Residues 146–170 (AAAASSSVAGQHSGYKNSGYKNSSY) form a disordered region. A compositionally biased stretch (polar residues) spans 160 to 170 (YKNSGYKNSSY).

Belongs to the chorion protein S15/S18 family.

It is found in the secreted. In terms of biological role, chorion membrane (egg shell) protein; plays a role in protecting the egg from the environment. The protein is Chorion protein S18 (Cp18) of Drosophila virilis (Fruit fly).